The chain runs to 116 residues: UPF0482 protein PC1_2049 (116 aa).

Residues 1–31 (MNHYSFSSLIRAFIPLSLVIVSAAWQPAALA) form the signal peptide.

This sequence belongs to the UPF0482 family.

This is UPF0482 protein PC1_2049 from Pectobacterium carotovorum subsp. carotovorum (strain PC1).